The following is a 104-amino-acid chain: L-rhamnose mutarotase (104 aa).

Residue Tyr-18 coordinates substrate. Catalysis depends on His-22, which acts as the Proton donor. Substrate-binding positions include Tyr-41 and 76-77 (WW).

Belongs to the rhamnose mutarotase family. Homodimer.

The protein localises to the cytoplasm. The enzyme catalyses alpha-L-rhamnose = beta-L-rhamnose. Its pathway is carbohydrate metabolism; L-rhamnose metabolism. Its function is as follows. Involved in the anomeric conversion of L-rhamnose. The protein is L-rhamnose mutarotase of Opitutus terrae (strain DSM 11246 / JCM 15787 / PB90-1).